The primary structure comprises 292 residues: Elongation factor Ts (292 aa).

Residues 81–84 form an involved in Mg(2+) ion dislocation from EF-Tu region; the sequence is TDFV.

The protein belongs to the EF-Ts family.

It is found in the cytoplasm. Associates with the EF-Tu.GDP complex and induces the exchange of GDP to GTP. It remains bound to the aminoacyl-tRNA.EF-Tu.GTP complex up to the GTP hydrolysis stage on the ribosome. This is Elongation factor Ts from Alkalilimnicola ehrlichii (strain ATCC BAA-1101 / DSM 17681 / MLHE-1).